A 610-amino-acid polypeptide reads, in one-letter code: Isocitrate dehydrogenase kinase/phosphatase (610 aa).

ATP contacts are provided by residues 359–365 and Lys380; that span reads APGFKGT. The active site involves Asp419.

Belongs to the AceK family.

It is found in the cytoplasm. It carries out the reaction L-seryl-[isocitrate dehydrogenase] + ATP = O-phospho-L-seryl-[isocitrate dehydrogenase] + ADP + H(+). In terms of biological role, bifunctional enzyme which can phosphorylate or dephosphorylate isocitrate dehydrogenase (IDH) on a specific serine residue. This is a regulatory mechanism which enables bacteria to bypass the Krebs cycle via the glyoxylate shunt in response to the source of carbon. When bacteria are grown on glucose, IDH is fully active and unphosphorylated, but when grown on acetate or ethanol, the activity of IDH declines drastically concomitant with its phosphorylation. This is Isocitrate dehydrogenase kinase/phosphatase from Rhodopseudomonas palustris (strain ATCC BAA-98 / CGA009).